A 140-amino-acid polypeptide reads, in one-letter code: Natriuretic peptides B (140 aa).

The first 26 residues, 1-26 (MEPCAALPRALLLLLFLHLSPLGGRP), serve as a signal peptide directing secretion. The segment at 71-94 (LEPLHRSHSPAEAPEAGGTPRGVL) is disordered. Cys118 and Cys134 are oxidised to a cystine.

Belongs to the natriuretic peptide family. In terms of processing, the precursor molecule is proteolytically cleaved by the endoproteases FURIN or CORIN at Arg-108 to produce the brain natriuretic peptide 32. CORIN also cleaves the precursor molecule at additional residues including Arg-105, Arg-108 and possibly Lys-111. Post-translationally, undergoes further proteolytic cleavage by various proteases such as DPP4, MME and possibly FAP, to give rise to a variety of shorter peptides. Cleaved at Pro-110 by the prolyl endopeptidase FAP (seprase) activity (in vitro). Degraded by IDE. During IDE degradation, the resulting products initially increase the activation of NPR1 and can also stimulate NPR2 to produce cGMP before the fragments are completely degraded and inactivated by IDE (in vitro). Brain and also in atria, but at much lower levels than ANP.

Its subcellular location is the secreted. Functionally, cardiac hormone that plays a key role in mediating cardio-renal homeostasis. May also function as a paracrine antifibrotic factor in the heart. Acts by specifically binding and stimulating NPR1 to produce cGMP, which in turn activates effector proteins that drive various biological responses. Involved in regulating the extracellular fluid volume and maintaining the fluid-electrolyte balance through natriuresis, diuresis, vasorelaxation, and inhibition of renin and aldosterone secretion. Binds the clearance receptor NPR3. May affect cardio-renal homeostasis. Able to promote the production of cGMP although its potency is very low compared to brain natriuretic peptide 32. The sequence is that of Natriuretic peptides B (NPPB) from Canis lupus familiaris (Dog).